A 420-amino-acid polypeptide reads, in one-letter code: D-tagatose-1,6-bisphosphate aldolase subunit GatZ (420 aa).

This sequence belongs to the GatZ/KbaZ family. GatZ subfamily. In terms of assembly, forms a complex with GatY.

It functions in the pathway carbohydrate metabolism; D-tagatose 6-phosphate degradation; D-glyceraldehyde 3-phosphate and glycerone phosphate from D-tagatose 6-phosphate: step 2/2. Functionally, component of the tagatose-1,6-bisphosphate aldolase GatYZ that is required for full activity and stability of the Y subunit. Could have a chaperone-like function for the proper and stable folding of GatY. When expressed alone, GatZ does not show any aldolase activity. Is involved in the catabolism of galactitol. The polypeptide is D-tagatose-1,6-bisphosphate aldolase subunit GatZ (Escherichia coli O17:K52:H18 (strain UMN026 / ExPEC)).